The following is a 1001-amino-acid chain: E3 ubiquitin-protein ligase BRE1B (1001 aa).

The disordered stretch occupies residues 1–31 (MSGLGNKRAAGDGGSGPPEKKLSREEKTTTT). Over residues 18-28 (PEKKLSREEKT) the composition is skewed to basic and acidic residues. Position 20 is an N6-acetyllysine (K20). Position 42 is a phosphoserine (S42). A coiled-coil region spans residues 45-91 (EEIDLKVLQFKNKKLAERLEQRQACEDELRERIEKLEKRQATDDATL). Positions 116 to 149 (GELSSAPEAPGTQEGPTCDGTPLPEPGTSELREP) are disordered. Coiled coils occupy residues 228 to 377 (ARTR…LRSL) and 437 to 523 (LQKK…AQTS). 2 positions are modified to N6-acetyllysine: K355 and K517. The segment at 516–646 (GKLRAQTSGS…EKAKVEEAKR (131 aa)) is disordered. The segment covering 520-531 (AQTSGSTHSTPN) has biased composition (polar residues). At S528 the chain carries Phosphoserine. Glycyl lysine isopeptide (Lys-Gly) (interchain with G-Cter in SUMO2) cross-links involve residues K578 and K579. S585 is modified (phosphoserine). 2 stretches are compositionally biased toward basic and acidic residues: residues 602 to 619 (RGREPEARPKRELREREG) and 633 to 646 (RADREKAKVEEAKR). Residues 627–946 (VASALSRADR…EEIKEYKARL (320 aa)) adopt a coiled-coil conformation. Residues 948-987 (CPCCNTRKKDAVLTKCFHVFCFECVRGRYEARQRKCPKCN) form an RING-type zinc finger.

Belongs to the BRE1 family. As to quaternary structure, component of the RNF20/40 complex (also known as BRE1 complex) probably composed of 2 copies of RNF20/BRE1A and 2 copies of RNF40/BRE1B. Interacts with UBE2E1/UBCH6. Interacts with RB1 and WAC.

The protein resides in the nucleus. It carries out the reaction S-ubiquitinyl-[E2 ubiquitin-conjugating enzyme]-L-cysteine + [acceptor protein]-L-lysine = [E2 ubiquitin-conjugating enzyme]-L-cysteine + N(6)-ubiquitinyl-[acceptor protein]-L-lysine.. It participates in protein modification; protein ubiquitination. Component of the RNF20/40 E3 ubiquitin-protein ligase complex that mediates monoubiquitination of 'Lys-120' of histone H2B (H2BK120ub1). H2BK120ub1 gives a specific tag for epigenetic transcriptional activation and is also prerequisite for histone H3 'Lys-4' and 'Lys-79' methylation (H3K4me and H3K79me, respectively). It thereby plays a central role in histone code and gene regulation. The RNF20/40 complex forms a H2B ubiquitin ligase complex in cooperation with the E2 enzyme UBE2A or UBE2B; reports about the cooperation with UBE2E1/UBCH are contradictory. Required for transcriptional activation of Hox genes. The sequence is that of E3 ubiquitin-protein ligase BRE1B (RNF40) from Macaca fascicularis (Crab-eating macaque).